The sequence spans 194 residues: Fe/S biogenesis protein NfuA (194 aa).

[4Fe-4S] cluster is bound by residues Cys-151 and Cys-154.

It belongs to the NfuA family. Homodimer. [4Fe-4S] cluster is required as a cofactor.

Its function is as follows. Involved in iron-sulfur cluster biogenesis. Binds a 4Fe-4S cluster, can transfer this cluster to apoproteins, and thereby intervenes in the maturation of Fe/S proteins. Could also act as a scaffold/chaperone for damaged Fe/S proteins. The chain is Fe/S biogenesis protein NfuA from Mannheimia succiniciproducens (strain KCTC 0769BP / MBEL55E).